The primary structure comprises 501 residues: Probable sucrose utilization protein SUC1 (501 aa).

Residues 13 to 39 constitute a DNA-binding region (zn(2)-C6 fungal-type); sequence CDSCSFRKVKCDMKTPCSRCVLNNLKC.

The protein belongs to the MAL13 family.

It is found in the nucleus. Affects sucrose utilization and alpha-glucosidase activity. Probable transcriptional activator. The chain is Probable sucrose utilization protein SUC1 (SUC1) from Candida albicans (strain SC5314 / ATCC MYA-2876) (Yeast).